A 290-amino-acid polypeptide reads, in one-letter code: Phosphate import ATP-binding protein PstB (290 aa).

An ABC transporter domain is found at 25–285; sequence LEARNLDFYY…PKTRRARDYL (261 aa). 57-64 contacts ATP; the sequence is GPSGCGKS.

This sequence belongs to the ABC transporter superfamily. Phosphate importer (TC 3.A.1.7) family. The complex is composed of two ATP-binding proteins (PstB), two transmembrane proteins (PstC and PstA) and a solute-binding protein (PstS).

It is found in the cell inner membrane. It catalyses the reaction phosphate(out) + ATP + H2O = ADP + 2 phosphate(in) + H(+). Part of the ABC transporter complex PstSACB involved in phosphate import. Responsible for energy coupling to the transport system. This Zymomonas mobilis subsp. mobilis (strain ATCC 31821 / ZM4 / CP4) protein is Phosphate import ATP-binding protein PstB.